The following is a 173-amino-acid chain: Shikimate kinase (173 aa).

ATP is bound at residue 11-16; it reads GAGKTT. Mg(2+) is bound at residue Thr-15. The substrate site is built by Asp-33, Arg-57, and Gly-79. Arg-118 serves as a coordination point for ATP. Arg-140 lines the substrate pocket.

Belongs to the shikimate kinase family. In terms of assembly, monomer. It depends on Mg(2+) as a cofactor.

It is found in the cytoplasm. The enzyme catalyses shikimate + ATP = 3-phosphoshikimate + ADP + H(+). It participates in metabolic intermediate biosynthesis; chorismate biosynthesis; chorismate from D-erythrose 4-phosphate and phosphoenolpyruvate: step 5/7. Catalyzes the specific phosphorylation of the 3-hydroxyl group of shikimic acid using ATP as a cosubstrate. The polypeptide is Shikimate kinase (Parabacteroides distasonis (strain ATCC 8503 / DSM 20701 / CIP 104284 / JCM 5825 / NCTC 11152)).